The primary structure comprises 465 residues: Mothers against decapentaplegic homolog 1 (465 aa).

M1 is modified (N-acetylmethionine). Positions 12–136 (PAVKRLLGWK…YKRVESPVLP (125 aa)) constitute an MH1 domain. Residues C64, C109, C121, and H126 each coordinate Zn(2+). Residues 162 to 246 (NEPHMPLNAT…DGSQPMDTNM (85 aa)) are disordered. Residues 179–212 (PNSHPFPHSPNSSYPNSPGGSSSTYPHSPTSSDP) are compositionally biased toward low complexity. The span at 221 to 232 (DTPPPAYLPPED) shows a compositional bias: pro residues. The 195-residue stretch at 271–465 (WCSIVYYELN…SPHNPISSVS (195 aa)) folds into the MH2 domain. At T322 the chain carries Phosphothreonine; by MINK1, TNIK and MAP4K4. Residues 418 to 428 (KGWGAEYHRQD) form an L3 loop region. 2 positions are modified to phosphoserine: S463 and S465.

It belongs to the dwarfin/SMAD family. As to quaternary structure, found in a complex with SMAD4 and YY1. Interacts with HGS, NANOG and ZCCHC12. Upon C-terminus phosphorylation: forms trimers with another SMAD1 and the co-SMAD SMAD4. Interacts with PEBP2-alpha subunit, CREB-binding protein (CBP), p300, SMURF1, SMURF2, USP15 and HOXC8. Associates with ZNF423 or ZNF521 in response to BMP2 leading to activate transcription of BMP target genes. Interacts with SKOR1. Interacts (via MH2 domain) with LEMD3. Binding to LEMD3 results in at least a partial reduction of receptor-mediated phosphorylation. Forms a ternary complex with PSMB4 and OAZ1 before PSMB4 is incorporated into the 20S proteasome. Interacts (via MH2 domain) with FAM83G (via MH2 domain); in a SMAD4-independent manner. Interacts with ZC3H3. Interacts with TMEM119. Interacts (via MH1 and MH2 domains) with ZNF8. Interacts with RANBP3L; the interaction increases when SMAD1 is not phosphorylated and mediates SMAD1 nuclear export. Interacts with EGR1; this interaction inhibits SMAD1 dephosphorylation. Interacts with SMAD6. Interacts with YAP1. Interacts with MTMR4; negatively regulates BMP signaling through SMAD1 dephosphorylation and retention in endosomes. In terms of processing, phosphorylation of the C-terminal SVS motif by BMP type 1 receptor kinase activates SMAD1 by promoting dissociation from the receptor and trimerization with SMAD4. Phosphorylation by ERK2 MAP kinase in response to EGF or HGF prevents SMAD1 nuclear accumulation and transcriptional activity in response to BMP. Dephosphorylation, probably by PPM1A, induces its export from the nucleus to the cytoplasm. Dephosphorylation is inhibited by association with EGR1. Phosphorylation by CDK8/9 creates binding sites for YAP1, and subsequent phosphorylation by GSK3 switches off YAP1 binding and adds binding sites for SMURF1. Ubiquitinated by SMAD-specific E3 ubiquitin ligase SMURF1, leading to its degradation. Monoubiquitinated, leading to prevent DNA-binding. Deubiquitination by USP15 alleviates inhibition and promotes activation of TGF-beta target genes. Dephosphorylation, probably by PPM1A, induces its export from the nucleus to the cytoplasm. Phospho-SMAD1 is ubiquitinated by CHIP leading to disruption of the SMAD1-SMAD4 complex. As to expression, ubiquitous.

The protein resides in the cytoplasm. It is found in the nucleus. Its function is as follows. Transcriptional modulator that plays a role in various cellular processes, including embryonic development, cell differentiation, and tissue homeostasis. Upon BMP ligand binding to their receptors at the cell surface, is phosphorylated by activated type I BMP receptors (BMPRIs) and associates with SMAD4 to form a heteromeric complex which translocates into the nucleus acting as transcription factor. In turn, the hetero-trimeric complex recognizes cis-regulatory elements containing Smad Binding Elements (SBEs) to modulate the outcome of the signaling network. SMAD1/OAZ1/PSMB4 complex mediates the degradation of the CREBBP/EP300 repressor SNIP1. Positively regulates BMP4-induced expression of odontogenic development regulator MSX1 following IPO7-mediated nuclear import. This chain is Mothers against decapentaplegic homolog 1 (Smad1), found in Mus musculus (Mouse).